The chain runs to 620 residues: Cilia- and flagella-associated protein 52 (620 aa).

12 WD repeats span residues 62-106 (GHSN…LMAR), 109-150 (LHKG…AICG), 156-195 (LNVG…RKIW), 203-242 (QMKR…LADT), 288-327 (QLQG…ETLV), 330-369 (CHFE…ELLR), 372-411 (VPNM…LMYV), 415-454 (AHRI…QKLE), 459-498 (EHKS…RNQM), 500-539 (LANT…GIRE), 543-582 (SLSG…VTHV), and 585-620 (GHSG…PFPS).

This sequence belongs to the CFAP52 family. Microtubule inner protein component of sperm flagellar doublet microtubules. Interacts with BRCA2. Interacts with the CCT chaperonin complex. Interacts with HSP70. Interacts with AK8. Interacts with CFAP45. Interacts with DNAI1. Interacts with IQDC. In terms of tissue distribution, expressed in respiratory cells and sperm (at protein level).

It localises to the cytoplasm. The protein resides in the cytoskeleton. It is found in the cilium axoneme. The protein localises to the flagellum axoneme. Functionally, microtubule inner protein (MIP) part of the dynein-decorated doublet microtubules (DMTs) in cilia axoneme. Important for proper ciliary and flagellar beating. May act in cooperation with CFAP45 and axonemal dynein subunit DNAH11. May play a role in cell growth and/or survival. In Sus scrofa (Pig), this protein is Cilia- and flagella-associated protein 52 (CFAP52).